Reading from the N-terminus, the 876-residue chain is Alanine--tRNA ligase (876 aa).

H562, H566, C666, and H670 together coordinate Zn(2+).

Belongs to the class-II aminoacyl-tRNA synthetase family. The cofactor is Zn(2+).

The protein localises to the cytoplasm. It carries out the reaction tRNA(Ala) + L-alanine + ATP = L-alanyl-tRNA(Ala) + AMP + diphosphate. Functionally, catalyzes the attachment of alanine to tRNA(Ala) in a two-step reaction: alanine is first activated by ATP to form Ala-AMP and then transferred to the acceptor end of tRNA(Ala). Also edits incorrectly charged Ser-tRNA(Ala) and Gly-tRNA(Ala) via its editing domain. In Hahella chejuensis (strain KCTC 2396), this protein is Alanine--tRNA ligase.